The following is a 417-amino-acid chain: Glucose-1-phosphate adenylyltransferase (417 aa).

Residues Y105, G170, 185–186 (EK), and S203 each bind alpha-D-glucose 1-phosphate.

It belongs to the bacterial/plant glucose-1-phosphate adenylyltransferase family. Homotetramer.

The enzyme catalyses alpha-D-glucose 1-phosphate + ATP + H(+) = ADP-alpha-D-glucose + diphosphate. Its pathway is glycan biosynthesis; glycogen biosynthesis. Its function is as follows. Involved in the biosynthesis of ADP-glucose, a building block required for the elongation reactions to produce glycogen. Catalyzes the reaction between ATP and alpha-D-glucose 1-phosphate (G1P) to produce pyrophosphate and ADP-Glc. The chain is Glucose-1-phosphate adenylyltransferase from Granulibacter bethesdensis (strain ATCC BAA-1260 / CGDNIH1).